The sequence spans 224 residues: 2,5-diamino-6-ribosylamino-4(3H)-pyrimidinone 5'-phosphate reductase (224 aa).

NADP(+)-binding positions include threonine 57, aspartate 61, 82–85, valine 131, and 153–156; these read STAN and GASI.

The protein belongs to the HTP reductase family. In terms of assembly, homodimer.

The catalysed reaction is 2,5-diamino-6-(1-D-ribitylamino)pyrimidin-4(3H)-one 5'-phosphate + NADP(+) = 2,5-diamino-6-(1-D-ribosylamino)pyrimidin-4(3H)-one 5'-phosphate + NADPH + H(+). It catalyses the reaction 2,5-diamino-6-(1-D-ribitylamino)pyrimidin-4(3H)-one 5'-phosphate + NAD(+) = 2,5-diamino-6-(1-D-ribosylamino)pyrimidin-4(3H)-one 5'-phosphate + NADH + H(+). The protein operates within cofactor biosynthesis; riboflavin biosynthesis. Its function is as follows. Catalyzes an early step in riboflavin biosynthesis, the NADPH-dependent reduction of the ribose side chain of 2,5-diamino-6-ribosylamino-4(3H)-pyrimidinone 5'-phosphate, yielding 2,5-diamino-6-ribitylamino-4(3H)-pyrimidinone 5'-phosphate. This is 2,5-diamino-6-ribosylamino-4(3H)-pyrimidinone 5'-phosphate reductase (ribD2) from Aquifex aeolicus (strain VF5).